A 237-amino-acid polypeptide reads, in one-letter code: MMVYIMNAFDIKSTKMDVLSISLHTSDLFDLEDVLVKLGKKFQESGVVPFVLDVQEFDYPESLDLAALVSLFSRHGMQILGLKHSNERWAAVAMKYHLLFCLSHSENVKELGQVEVQKTEDGQKARKTVLITSPVRTGQQVYAEDGDLIVTGAVNQGAELIADGNMHIYAPMRGRALAGAKGDTSARIFIHSMQAELVSVAGIYRNFEQDLPDHLHKQPVQILLQDNRLVISAIGSE.

It belongs to the MinC family. In terms of assembly, interacts with MinD and FtsZ.

Its function is as follows. Cell division inhibitor that blocks the formation of polar Z ring septums. Rapidly oscillates between the poles of the cell to destabilize FtsZ filaments that have formed before they mature into polar Z rings. Prevents FtsZ polymerization. This is Probable septum site-determining protein MinC from Neisseria gonorrhoeae.